A 76-amino-acid polypeptide reads, in one-letter code: UPF0235 protein MRA_1997 (76 aa).

Belongs to the UPF0235 family.

This chain is UPF0235 protein MRA_1997, found in Mycobacterium tuberculosis (strain ATCC 25177 / H37Ra).